The following is a 783-amino-acid chain: Serine/threonine-protein kinase SIK1 (783 aa).

The Protein kinase domain occupies tyrosine 27 to methionine 278. Residues leucine 33–valine 41 and lysine 56 each bind ATP. Aspartate 149 acts as the Proton acceptor in catalysis. The residue at position 182 (threonine 182) is a Phosphothreonine; by LKB1 and GSK3-beta. Serine 186 bears the Phosphoserine; by autocatalysis mark. One can recognise a UBA domain in the interval aspartate 303–glutamate 343. Threonine 322 is subject to Phosphothreonine; by CaMK1. 2 disordered regions span residues cysteine 353 to glutamate 377 and arginine 449 to valine 477. Threonine 473 bears the Phosphothreonine; by PKA mark. Serine 575 is subject to Phosphoserine; by PKA. Positions leucine 583 to valine 612 are RK-rich region; required for cAMP responsiveness and nuclear localization. The disordered stretch occupies residues arginine 619–glycine 643.

It belongs to the protein kinase superfamily. CAMK Ser/Thr protein kinase family. AMPK subfamily. In terms of assembly, interacts with ATP1A1. Interacts (when phosphorylated on Thr-182 and Ser-186) with YWHAZ. Interacts (when phosphorylated at Thr-473 and/or Ser-575) with 14-3-3 proteins; the interaction inhibits kinase activity towards TORCs. There is a cooperative effect of the phosphorylation sites in 14-3-3 binding as the interaction is stronger when both Thr-473 and Ser-575 are modified. Requires Mg(2+) as cofactor. Phosphorylated at Thr-182 by STK11/LKB1 in complex with STE20-related adapter-alpha (STRADA) pseudo kinase and CAB39, leading to its activation. Phosphorylation at Thr-182 promotes autophosphorylation at Ser-186, which is required for sustained activity. Autophosphorylation at Ser-186 is maintained by sequential phosphorylation at Thr-182 by GSK3-beta. GSK3-beta cannot initiate phosphorylation at Thr-182, it can only maintain it. Phosphorylation at Ser-575 in response to cAMP signaling promotes translocation to the cytoplasm. Phosphorylation at Thr-322 by CaMK1 following intracellular sodium concentration leads to activation.

It localises to the cytoplasm. The protein localises to the nucleus. It catalyses the reaction L-seryl-[protein] + ATP = O-phospho-L-seryl-[protein] + ADP + H(+). The enzyme catalyses L-threonyl-[protein] + ATP = O-phospho-L-threonyl-[protein] + ADP + H(+). Its activity is regulated as follows. Activated by phosphorylation on Thr-182. Also activated by phosphorylation on Thr-322 in response to increases in intracellular sodium in parallel with elevations in intracellular calcium through the reversible sodium/calcium exchanger. Inhibited by phosphorylation at Thr-473 and Ser-575, probably by PKA, which triggers interaction with 14-3-3 proteins. Its function is as follows. Serine/threonine-protein kinase involved in various processes such as cell cycle regulation, gluconeogenesis and lipogenesis regulation, muscle growth and differentiation and tumor suppression. Phosphorylates HDAC4, HDAC5, PPME1, SREBF1, CRTC1/TORC1. Inhibits CREB activity by phosphorylating and inhibiting activity of TORCs, the CREB-specific coactivators, like CRTC2/TORC2 and CRTC3/TORC3 in response to cAMP signaling. Acts as a tumor suppressor and plays a key role in p53/TP53-dependent anoikis, a type of apoptosis triggered by cell detachment: required for phosphorylation of p53/TP53 in response to loss of adhesion and is able to suppress metastasis. Part of a sodium-sensing signaling network, probably by mediating phosphorylation of PPME1: following increases in intracellular sodium, SIK1 is activated by CaMK1 and phosphorylates PPME1 subunit of protein phosphatase 2A (PP2A), leading to dephosphorylation of sodium/potassium-transporting ATPase ATP1A1 and subsequent increase activity of ATP1A1. Acts as a regulator of muscle cells by phosphorylating and inhibiting class II histone deacetylases HDAC4 and HDAC5, leading to promote expression of MEF2 target genes in myocytes. Also required during cardiomyogenesis by regulating the exit of cardiomyoblasts from the cell cycle via down-regulation of CDKN1C/p57Kip2. Acts as a regulator of hepatic gluconeogenesis by phosphorylating and repressing the CREB-specific coactivators CRTC1/TORC1 and CRTC2/TORC2, leading to inhibit CREB activity. Also regulates hepatic lipogenesis by phosphorylating and inhibiting SREBF1. In concert with CRTC1/TORC1, regulates the light-induced entrainment of the circadian clock by attenuating PER1 induction; represses CREB-mediated transcription of PER1 by phosphorylating and deactivating CRTC1/TORC1. This Homo sapiens (Human) protein is Serine/threonine-protein kinase SIK1 (SIK1).